The chain runs to 284 residues: MKQKVVSIGDINVANDLPFVLFGGMNVLESRDLAMRICEHYLTVTQKLGIPYVFKASFDKANRSSIHSYRGPGLEEGMKIFQELKQTFGVKIITDVHEPSQAQPVADVVDVIQLPAFLARQTDLVEAMAKTGAVINVKKPQFVSPGQMGNIVDKFKEGGNEKVILCDRGANFGYDNLVVDMLGFSIMKKVSGNSPVIFDVTHALQCRDPFGAPSGGRRAQVAELARAGMAVGLAGLFIEAHPDPEHAKCDGPSALPLAKLEPFLKQMKAIDDLVKGFEELDTSK.

The protein belongs to the KdsA family.

The protein resides in the cytoplasm. It catalyses the reaction D-arabinose 5-phosphate + phosphoenolpyruvate + H2O = 3-deoxy-alpha-D-manno-2-octulosonate-8-phosphate + phosphate. The protein operates within carbohydrate biosynthesis; 3-deoxy-D-manno-octulosonate biosynthesis; 3-deoxy-D-manno-octulosonate from D-ribulose 5-phosphate: step 2/3. It functions in the pathway bacterial outer membrane biogenesis; lipopolysaccharide biosynthesis. The chain is 2-dehydro-3-deoxyphosphooctonate aldolase from Escherichia coli O6:K15:H31 (strain 536 / UPEC).